The sequence spans 660 residues: Ankyrin repeat domain-containing protein OPG023 (660 aa).

9 ANK repeats span residues 31-64, 101-131, 135-166, 190-222, 226-257, 268-302, 325-359, 449-478, and 482-512; these read FKNN…PLHK, NDFN…DLSV, NHRS…SVLY, YIIA…KPSS, NYCT…NTAY, RGIM…PYGI, NSDV…VVNK, RGET…DVNI, and NGYT…TLDC. Positions 578 to 658 are PRANC/F-box-like; it reads NTMFSLIFTE…PYTIKYKIFE (81 aa).

It belongs to the orthopoxvirus OPG023 family. As to quaternary structure, interacts (via N-terminus) with host RELA. Interacts (via PRANC/F-box-like domain) with the SKP1 component of the host SCF ubiquitin ligase complex.

In terms of biological role, substrate-specific adapter of SKP1-containing E3 ubiquitin-protein ligases which mediate the ubiquitination and subsequent proteasomal degradation of host target proteins. Prevents activation and subsequent nuclear localization of NF-kappa-B in infected cells, by targeting NF-kappa-B RELA subunit to the SCF E3 ligase complex. The chain is Ankyrin repeat domain-containing protein OPG023 (OPG023) from Cynomys gunnisoni (Gunnison's prairie dog).